Consider the following 827-residue polypeptide: Disintegrin and metalloproteinase domain-containing protein 17 (827 aa).

The N-terminal stretch at 1–17 is a signal peptide; the sequence is MRQRLLFLTTLVPFVLA. Positions 18-214 are excised as a propeptide; it reads PRPPEEPGSG…SEEFVRRVKR (197 aa). Residue asparagine 157 is glycosylated (N-linked (GlcNAc...) asparagine). The Cysteine switch motif lies at 182-189; it reads KVCGYLNA. Cysteine 184 serves as a coordination point for Zn(2+). Topologically, residues 215–671 are extracellular; that stretch reads RAEPNPLKNT…NTFGKFLADN (457 aa). A Peptidase M12B domain is found at 223-474; that stretch reads NTCKLLVVAD…KAQECFQERS (252 aa). Intrachain disulfides connect cysteine 225-cysteine 333, cysteine 365-cysteine 469, and cysteine 423-cysteine 453. Asparagine 264 carries N-linked (GlcNAc...) asparagine glycosylation. Residue histidine 405 coordinates Zn(2+). Glutamate 406 is an active-site residue. Zn(2+) is bound by residues histidine 409 and histidine 415. Residues asparagine 452, asparagine 498, asparagine 539, and asparagine 551 are each glycosylated (N-linked (GlcNAc...) asparagine). Residues 475–563 enclose the Disintegrin domain; sequence NKVCGNSRVD…ECPPPGDAED (89 aa). 4 cysteine pairs are disulfide-bonded: cysteine 534–cysteine 555, cysteine 573–cysteine 582, cysteine 578–cysteine 591, and cysteine 593–cysteine 600. The interval 603–671 is crambin-like; the sequence is CCRNLSGPCV…NTFGKFLADN (69 aa). Residue asparagine 606 is glycosylated (N-linked (GlcNAc...) asparagine). The helical transmembrane segment at 672–692 threads the bilayer; sequence IVGSVLVFSLIFWIPFSILVH. Topologically, residues 693–827 are cytoplasmic; that stretch reads CVDKKLDKQY…SRVDSKETEC (135 aa). The SH3-binding signature appears at 731–738; the sequence is PAPQTPGR. Phosphothreonine; by MAPK14 is present on threonine 735. Threonine 764 carries the phosphothreonine modification. Positions 766-827 are disordered; it reads QEDPSTDSHV…SRVDSKETEC (62 aa). Residue serine 770 is modified to Phosphoserine. 3 stretches are compositionally biased toward basic and acidic residues: residues 771–784, 794–810, and 818–827; these read TDSHVDDDGFEKDP, SFEDLTDHPVTRSEKAA, and SRVDSKETEC. A phosphoserine mark is found at serine 794 and serine 822.

Interacts with MAD2L1, MAPK14 and MUC1. Interacts with iRhom1/RHBDF1 and iRhom2/RHBDF2. Interacts with FRMD8 via its interaction with iRhom1/RHBDF1 and iRhom2/RHBDF2. Interacts with TSPAN8. The cofactor is Zn(2+). In terms of processing, the precursor is cleaved by a furin endopeptidase. Phosphorylated. Stimulation by growth factor or phorbol 12-myristate 13-acetate induces phosphorylation of Ser-822 but decreases phosphorylation of Ser-794. Phosphorylation at Thr-735 by MAPK14 is required for ADAM17-mediated ectodomain shedding.

Its subcellular location is the membrane. It catalyses the reaction Narrow endopeptidase specificity. Cleaves Pro-Leu-Ala-Gln-Ala-|-Val-Arg-Ser-Ser-Ser in the membrane-bound, 26-kDa form of tumor necrosis factor alpha (TNFalpha). Similarly cleaves other membrane-anchored, cell-surface proteins to 'shed' the extracellular domains.. In terms of biological role, transmembrane metalloprotease which mediates the ectodomain shedding of a myriad of transmembrane proteins including adhesion proteins, growth factor precursors and cytokines important for inflammation and immunity. Cleaves the membrane-bound precursor of TNF-alpha to its mature soluble form. Responsible for the proteolytical release of soluble JAM3 from endothelial cells surface. Responsible for the proteolytic release of several other cell-surface proteins, including p75 TNF-receptor, interleukin 1 receptor type II, p55 TNF-receptor, transforming growth factor-alpha, L-selectin, growth hormone receptor, MUC1 and the amyloid precursor protein. Acts as an activator of Notch pathway by mediating cleavage of Notch, generating the membrane-associated intermediate fragment called Notch extracellular truncation (NEXT). Plays a role in the proteolytic processing of ACE2. Plays a role in hemostasis through shedding of GP1BA, the platelet glycoprotein Ib alpha chain. Mediates the proteolytic cleavage of LAG3, leading to release the secreted form of LAG3. Mediates the proteolytic cleavage of IL6R, leading to the release of secreted form of IL6R. Mediates the proteolytic cleavage and shedding of FCGR3A upon NK cell stimulation, a mechanism that allows for increased NK cell motility and detachment from opsonized target cells. Cleaves TREM2, resulting in shedding of the TREM2 ectodomain. The polypeptide is Disintegrin and metalloproteinase domain-containing protein 17 (Adam17) (Rattus norvegicus (Rat)).